Here is a 77-residue protein sequence, read N- to C-terminus: uncharacterized protein (77 aa).

This is an uncharacterized protein from Salmonella typhimurium (strain LT2 / SGSC1412 / ATCC 700720).